A 248-amino-acid polypeptide reads, in one-letter code: Triosephosphate isomerase (248 aa).

Substrate-binding residues include Asn-11 and Lys-13. His-95 serves as the catalytic Electrophile. Residue Glu-165 is the Proton acceptor of the active site.

This sequence belongs to the triosephosphate isomerase family. In terms of assembly, homodimer.

It localises to the cytoplasm. The catalysed reaction is dihydroxyacetone phosphate = methylglyoxal + phosphate. It catalyses the reaction D-glyceraldehyde 3-phosphate = dihydroxyacetone phosphate. It functions in the pathway carbohydrate degradation; glycolysis; D-glyceraldehyde 3-phosphate from glycerone phosphate: step 1/1. The protein operates within carbohydrate biosynthesis; gluconeogenesis. Triosephosphate isomerase is an extremely efficient metabolic enzyme that catalyzes the interconversion between dihydroxyacetone phosphate (DHAP) and D-glyceraldehyde-3-phosphate (G3P) in glycolysis and gluconeogenesis. Functionally, it is also responsible for the non-negligible production of methylglyoxal a reactive cytotoxic side-product that modifies and can alter proteins, DNA and lipids. This Gallus gallus (Chicken) protein is Triosephosphate isomerase (TPI1).